The sequence spans 122 residues: MIQTQSFLNVADNSGARKLMCIRILNSSNCKYANIGDTIIAVVKEAIPNMSIKKSEIVKAVVVRTRKGIKRQSGITIRFDDNAAVIINQDGNPRGTRVFGPVARELREENFTKIVSLAPEVL.

It belongs to the universal ribosomal protein uL14 family. As to quaternary structure, part of the 50S ribosomal subunit.

It localises to the plastid. The protein localises to the chloroplast. Binds to 23S rRNA. The sequence is that of Large ribosomal subunit protein uL14c from Chara vulgaris (Common stonewort).